Consider the following 900-residue polypeptide: Probable beta-mannosidase (900 aa).

The N-terminal stretch at 1 to 21 (MRTSLVVCLFWLLFQLHTTHG) is a signal peptide. N-linked (GlcNAc...) asparagine glycans are attached at residues Asn38, Asn42, and Asn131. The active-site Proton donor is the Glu463. Asn477, Asn576, Asn661, and Asn738 each carry an N-linked (GlcNAc...) asparagine glycan.

Belongs to the glycosyl hydrolase 2 family.

It is found in the lysosome. The enzyme catalyses Hydrolysis of terminal, non-reducing beta-D-mannose residues in beta-D-mannosides.. This is Probable beta-mannosidase from Caenorhabditis elegans.